A 313-amino-acid chain; its full sequence is 1-phosphofructokinase (313 aa).

Residues 222–227 (SMGAKG) and 254–255 (GD) each bind ATP. The active-site Proton acceptor is the D255.

This sequence belongs to the carbohydrate kinase PfkB family.

It catalyses the reaction beta-D-fructose 1-phosphate + ATP = beta-D-fructose 1,6-bisphosphate + ADP + H(+). Catalyzes the ATP-dependent phosphorylation of fructose-l-phosphate to fructose-l,6-bisphosphate. This is 1-phosphofructokinase (fruK) from Haemophilus influenzae (strain ATCC 51907 / DSM 11121 / KW20 / Rd).